The primary structure comprises 936 residues: Calcium homeostasis endoplasmic reticulum protein (936 aa).

Position 1 is an N-acetylmethionine (methionine 1). An SURP motif repeat occupies 15–57 (VIDKLAQFVARNGPEFEKMTMEKQKDNPKFSFLFGGEFYSYYK). Lysine 18 carries the post-translational modification N6-acetyllysine. The interval 77–102 (EPTSAMPPLPQPPLAPTASLTPAQGT) is disordered. Pro residues predominate over residues 81–91 (AMPPLPQPPLA). The CID domain maps to 149-289 (ETQLDMSEFD…QLQSPALGLG (141 aa)). Residues 328 to 646 (LAQQQQQQQQ…RQGPPHINHD (319 aa)) are disordered. Over residues 330-355 (QQQQQQQQQQQQQPQPQPQPQIQLPQ) the composition is skewed to low complexity. The span at 363–383 (TPPPPAPPPASAPAPTIPPTT) shows a compositional bias: pro residues. Over residues 395 to 405 (PGSSEYDTSAG) the composition is skewed to polar residues. A compositionally biased stretch (low complexity) spans 488–500 (PWNNQPDPNWNNQ). Over residues 534–550 (PFPPHQQHPQFNQPPHP) the composition is skewed to pro residues. A compositionally biased stretch (low complexity) spans 551–560 (HNFNRFPPRF). The span at 561–572 (MQDDFPPRHPFE) shows a compositional bias: basic and acidic residues. The segment covering 594–603 (PHHHPGHRMP) has biased composition (basic residues). Position 723 is a phosphotyrosine (tyrosine 723). Residues 731–887 (RARRRKGQEK…DPIKGGDVRD (157 aa)) form a disordered region. Positions 748 to 758 (SRSRSKSRGRS) are enriched in basic residues. The segment covering 759-773 (SSRSSSRSSKSSRSS) has biased composition (low complexity). Residues 774-824 (SRSHSRSRSRSSSRSRSRSRSRSRSSRSRSRSRSRSRSKSYSPGRRRRSRS) show a composition bias toward basic residues. Phosphoserine is present on residues serine 822, serine 824, and serine 826. Threonine 828 carries the phosphothreonine modification. Serine 837 is modified (phosphoserine). Positions 850 to 900 (EENKGHQMLVKMGWSGSGGLGAKEQGIQDPIKGGDVRDKWDQYKGVGVALD) constitute a G-patch domain. Lysine 853 is covalently cross-linked (Glycyl lysine isopeptide (Lys-Gly) (interchain with G-Cter in SUMO2)). Phosphoserine occurs at positions 864 and 866. Lysine 881 is covalently cross-linked (Glycyl lysine isopeptide (Lys-Gly) (interchain with G-Cter in SUMO2)). Lysine 888 is modified (N6-acetyllysine). Serine 913 is subject to Phosphoserine.

The protein resides in the cytoplasm. It localises to the perinuclear region. It is found in the endoplasmic reticulum. Involved in calcium homeostasis, growth and proliferation. This is Calcium homeostasis endoplasmic reticulum protein from Mus musculus (Mouse).